Here is a 161-residue protein sequence, read N- to C-terminus: 2-C-methyl-D-erythritol 2,4-cyclodiphosphate synthase (161 aa).

Positions 8 and 10 each coordinate a divalent metal cation. Residues 8–10 (DLH) and 34–35 (HS) each bind 4-CDP-2-C-methyl-D-erythritol 2-phosphate. A divalent metal cation is bound at residue H42. 4-CDP-2-C-methyl-D-erythritol 2-phosphate-binding positions include 56-58 (DIG), 100-106 (AEYPKML), and R142.

This sequence belongs to the IspF family. As to quaternary structure, homotrimer. The cofactor is a divalent metal cation.

The enzyme catalyses 4-CDP-2-C-methyl-D-erythritol 2-phosphate = 2-C-methyl-D-erythritol 2,4-cyclic diphosphate + CMP. It functions in the pathway isoprenoid biosynthesis; isopentenyl diphosphate biosynthesis via DXP pathway; isopentenyl diphosphate from 1-deoxy-D-xylulose 5-phosphate: step 4/6. In terms of biological role, involved in the biosynthesis of isopentenyl diphosphate (IPP) and dimethylallyl diphosphate (DMAPP), two major building blocks of isoprenoid compounds. Catalyzes the conversion of 4-diphosphocytidyl-2-C-methyl-D-erythritol 2-phosphate (CDP-ME2P) to 2-C-methyl-D-erythritol 2,4-cyclodiphosphate (ME-CPP) with a corresponding release of cytidine 5-monophosphate (CMP). This is 2-C-methyl-D-erythritol 2,4-cyclodiphosphate synthase from Buchnera aphidicola subsp. Acyrthosiphon pisum (strain 5A).